The chain runs to 647 residues: Protein RAD61 (647 aa).

The disordered stretch occupies residues 1-90; the sequence is MRAYGKRGPV…QLDSKRNDQN (90 aa). Over residues 66-82 the composition is skewed to polar residues; sequence DSSSSFDGANEKPSSQL.

It is found in the nucleus. Its function is as follows. Involved in resistance to ionizing radiation. This is Protein RAD61 (RAD61) from Saccharomyces cerevisiae (strain ATCC 204508 / S288c) (Baker's yeast).